Consider the following 745-residue polypeptide: Inhibitor of nuclear factor kappa-B kinase subunit alpha (745 aa).

Residues 15–302 form the Protein kinase domain; sequence WEMRERLGTG…LTLKQPRCFV (288 aa). Residues 21 to 29 and Lys44 each bind ATP; that span reads LGTGGFGNV. Thr23 is modified (phosphothreonine; by PKB/AKT1 and SGK1). The active-site Proton acceptor is Asp144. A Phosphoserine; by MAP3K14 modification is found at Ser176. Thr179 carries the post-translational modification (Microbial infection) O-acetylthreonine; by Yersinia YopJ. Ser180 carries the phosphoserine; by SGK1 modification. The leucine-zipper stretch occupies residues 455 to 476; the sequence is LLRYNANLTKMKNTLISASQQL. Positions 738–743 are NEMO-binding; it reads LDWSWL.

Belongs to the protein kinase superfamily. Ser/Thr protein kinase family. I-kappa-B kinase subfamily. Component of the I-kappa-B-kinase (IKK) core complex consisting of CHUK, IKBKB and IKBKG; probably four alpha/CHUK-beta/IKBKB dimers are associated with four gamma/IKBKG subunits. The IKK core complex seems to associate with regulatory or adapter proteins to form a IKK-signalosome holo-complex. The IKK complex associates with TERF2IP/RAP1, leading to promote IKK-mediated phosphorylation of RELA/p65. Part of a complex composed of NCOA2, NCOA3, CHUK/IKKA, IKBKB, IKBKG and CREBBP. Part of a 70-90 kDa complex at least consisting of CHUK/IKKA, IKBKB, NFKBIA, RELA, ELP1 and MAP3K14. Directly interacts with TRPC4AP. May interact with TRAF2. Interacts with NALP2. May interact with MAVS/IPS1. Interacts with ARRB1 and ARRB2. Interacts with NLRC5; prevents CHUK phosphorylation and kinase activity. Interacts with PIAS1; this interaction induces PIAS1 phosphorylation. Interacts with ZNF268 isoform 2; the interaction is further increased in a TNF-alpha-dependent manner. Interacts with FOXO3. Interacts with IFIT5; the interaction synergizes the recruitment of IKK to MAP3K7 and enhances IKK phosphorylation. Interacts with LRRC14. Interacts with SASH1. Directly interacts with DDX3X after the physiological activation of the TLR7 and TLR8 pathways; this interaction enhances CHUK autophosphorylation. As to quaternary structure, (Microbial infection) Interacts with InlC of Listeria monocytogenes. In terms of processing, phosphorylated by MAP3K14/NIK, AKT and to a lesser extent by MEKK1, and dephosphorylated by PP2A. Autophosphorylated. Post-translationally, ubiquitinated by TRIM56 via 'Lys-63'-linked ubiquitination, promoting activation of CHUK/IKKA. (Microbial infection) Acetylation of Thr-179 by Yersinia YopJ prevents phosphorylation and activation, thus blocking the I-kappa-B signaling pathway. In terms of tissue distribution, widely expressed.

It is found in the cytoplasm. The protein resides in the nucleus. The catalysed reaction is L-seryl-[I-kappa-B protein] + ATP = O-phospho-L-seryl-[I-kappa-B protein] + ADP + H(+). With respect to regulation, activated when phosphorylated and inactivated when dephosphorylated. In terms of biological role, serine kinase that plays an essential role in the NF-kappa-B signaling pathway which is activated by multiple stimuli such as inflammatory cytokines, bacterial or viral products, DNA damages or other cellular stresses. Acts as a part of the canonical IKK complex in the conventional pathway of NF-kappa-B activation and phosphorylates inhibitors of NF-kappa-B on serine residues. These modifications allow polyubiquitination of the inhibitors and subsequent degradation by the proteasome. In turn, free NF-kappa-B is translocated into the nucleus and activates the transcription of hundreds of genes involved in immune response, growth control, or protection against apoptosis. Negatively regulates the pathway by phosphorylating the scaffold protein TAXBP1 and thus promoting the assembly of the A20/TNFAIP3 ubiquitin-editing complex (composed of A20/TNFAIP3, TAX1BP1, and the E3 ligases ITCH and RNF11). Therefore, CHUK plays a key role in the negative feedback of NF-kappa-B canonical signaling to limit inflammatory gene activation. As part of the non-canonical pathway of NF-kappa-B activation, the MAP3K14-activated CHUK/IKKA homodimer phosphorylates NFKB2/p100 associated with RelB, inducing its proteolytic processing to NFKB2/p52 and the formation of NF-kappa-B RelB-p52 complexes. In turn, these complexes regulate genes encoding molecules involved in B-cell survival and lymphoid organogenesis. Also participates in the negative feedback of the non-canonical NF-kappa-B signaling pathway by phosphorylating and destabilizing MAP3K14/NIK. Within the nucleus, phosphorylates CREBBP and consequently increases both its transcriptional and histone acetyltransferase activities. Modulates chromatin accessibility at NF-kappa-B-responsive promoters by phosphorylating histones H3 at 'Ser-10' that are subsequently acetylated at 'Lys-14' by CREBBP. Additionally, phosphorylates the CREBBP-interacting protein NCOA3. Also phosphorylates FOXO3 and may regulate this pro-apoptotic transcription factor. Phosphorylates RIPK1 at 'Ser-25' which represses its kinase activity and consequently prevents TNF-mediated RIPK1-dependent cell death. Phosphorylates AMBRA1 following mitophagy induction, promoting AMBRA1 interaction with ATG8 family proteins and its mitophagic activity. This chain is Inhibitor of nuclear factor kappa-B kinase subunit alpha (CHUK), found in Homo sapiens (Human).